The chain runs to 363 residues: LIM and cysteine-rich domains protein 1 (363 aa).

S16 is subject to Phosphoserine. The PET domain occupies 99 to 206; it reads MIMTNPIATG…GEVALPGQGG (108 aa). The disordered stretch occupies residues 200 to 233; the sequence is ALPGQGGLPKEEGKQQEKPEGAETAAPTANGSLG. The span at 208 to 220 shows a compositional bias: basic and acidic residues; it reads PKEEGKQQEKPEG. 2 consecutive LIM zinc-binding domains span residues 239–304 and 305–363; these read YVCE…SLRP and RCSG…SKRT.

As to quaternary structure, interacts with beta-dystroglycan. Interacts with GATA1, GATA4 and GATA6. As to expression, highly expressed in both skeletal muscle and cardiac muscle.

It localises to the cytoplasm. It is found in the nucleus. Its function is as follows. Transcriptional cofactor that restricts GATA6 function by inhibiting DNA-binding, resulting in repression of GATA6 transcriptional activation of downstream target genes. Represses GATA6-mediated trans activation of lung- and cardiac tissue-specific promoters. Inhibits DNA-binding by GATA4 and GATA1 to the cTNC promoter. Plays a critical role in the development of cardiac hypertrophy via activation of calcineurin/nuclear factor of activated T-cells signaling pathway. This Sus scrofa (Pig) protein is LIM and cysteine-rich domains protein 1 (LMCD1).